The sequence spans 260 residues: MVLIKVLANLLVLQLSYAQKSSELVVGGDECNINEHPFLVALYTSASSTIHCAGALINREWVLTAAHCDRRNIRIKLGMHSKNIRNEDEQIRVPRGKYFCLNTKFPNGLDKDIMLIRLRRPVTYSTHIAPVSLPSRSRGVGSRCRIMGWGKISTTEDTYPDVPHCTNIFIVKHKWCEPLYPWVPADSRTLCAGILKGGRDTCHGDSGGPLICNGEMHGIVAGGSEPCGQHLKPAVYTKVFDYNNWIQSIIAGNRTVTCPP.

An N-terminal signal peptide occupies residues 1–18 (MVLIKVLANLLVLQLSYA). Residues 19 to 24 (QKSSEL) constitute a propeptide that is removed on maturation. The Peptidase S1 domain maps to 25–251 (VVGGDECNIN…YNNWIQSIIA (227 aa)). 6 cysteine pairs are disulfide-bonded: C31-C165, C52-C68, C100-C258, C144-C212, C176-C191, and C202-C227. Catalysis depends on charge relay system residues H67 and D112. S206 acts as the Charge relay system in catalysis. N253 carries an N-linked (GlcNAc...) asparagine glycan.

Belongs to the peptidase S1 family. Snake venom subfamily. As to quaternary structure, monomer. Expressed by the venom gland.

It is found in the secreted. It carries out the reaction Fully activates human clotting factor V by a single cleavage at the 1545-Trp-Tyr-Leu-Arg-|-Ser-Asn-Asn-Gly-1552 bond. Cattle, but not rabbit, factor V is cleaved, and no other proteins of the clotting system are attacked. Esterase activity is observed on Bz-Arg-OEt and Tos-Arg-OMe, and amidase activity on Phe-pipecolyl-Arg-NHPhNO2.. In terms of biological role, venom serine protease that selectively activates factor V (F5) in a calcium-independent manner. It cleaves the Arg(1545)-Ser(1546) linkage in the human factor V molecule. Induces the coagulation of mammalian plasma. This is Factor V activator RVV-V gamma from Daboia siamensis (Eastern Russel's viper).